The primary structure comprises 57 residues: uncharacterized protein (57 aa).

This is an uncharacterized protein from Saccharomyces cerevisiae (strain ATCC 204508 / S288c) (Baker's yeast).